The primary structure comprises 141 residues: Large ribosomal subunit protein uL11 (141 aa).

It belongs to the universal ribosomal protein uL11 family. Part of the ribosomal stalk of the 50S ribosomal subunit. Interacts with L10 and the large rRNA to form the base of the stalk. L10 forms an elongated spine to which L12 dimers bind in a sequential fashion forming a multimeric L10(L12)X complex. In terms of processing, one or more lysine residues are methylated.

Functionally, forms part of the ribosomal stalk which helps the ribosome interact with GTP-bound translation factors. The polypeptide is Large ribosomal subunit protein uL11 (Chlorobaculum tepidum (strain ATCC 49652 / DSM 12025 / NBRC 103806 / TLS) (Chlorobium tepidum)).